Consider the following 373-residue polypeptide: PqqA peptide cyclase (373 aa).

The 216-residue stretch at 9–224 (LTKPRWLLAE…QSYKEKVKGR (216 aa)) folds into the Radical SAM core domain. Positions 23, 27, and 30 each coordinate [4Fe-4S] cluster.

This sequence belongs to the radical SAM superfamily. PqqE family. In terms of assembly, interacts with PqqD. The interaction is necessary for activity of PqqE. It depends on [4Fe-4S] cluster as a cofactor.

The enzyme catalyses [PQQ precursor protein] + S-adenosyl-L-methionine = E-Y cross-linked-[PQQ precursor protein] + 5'-deoxyadenosine + L-methionine + H(+). It participates in cofactor biosynthesis; pyrroloquinoline quinone biosynthesis. Catalyzes the cross-linking of a glutamate residue and a tyrosine residue in the PqqA protein as part of the biosynthesis of pyrroloquinoline quinone (PQQ). This chain is PqqA peptide cyclase, found in Methylococcus capsulatus (strain ATCC 33009 / NCIMB 11132 / Bath).